The primary structure comprises 178 residues: Twist-related protein (178 aa).

One can recognise a bHLH domain in the interval 20–71 (QQRACANRRERQRTKELNDAFTLLRKLIPSMPSDKMSKIHTLRIATDYISFL).

Efficient DNA binding requires dimerization with another bHLH protein. Homodimer. Forms a heterodimer with hlh-2. As to expression, expressed in defecation-associated muscles and neuron-like cells in the head at the L1 stage. In later larvae, expressed in SM cells and their descendants. Not expressed in differentiated body wall or sex muscles.

The protein localises to the nucleus. Its function is as follows. Acts as a transcriptional regulator. Involved in postembryonic mesodermal cell fate specification. Activates ceh-24 and egl-15 during mesodermal patterning. This Caenorhabditis elegans protein is Twist-related protein (hlh-8).